A 103-amino-acid chain; its full sequence is Matrix Gla protein (103 aa).

Positions 1–19 (MKSLILLAILAALAVVTLC) are cleaved as a signal peptide. 4-carboxyglutamate is present on E21. Residues S22, S25, and S28 each carry the phosphoserine modification. One can recognise a Gla domain in the interval 51–97 (RAKVQERIRERSKPVHELNREACDDYRLCERYAMVYGYNAAYNRYFR). E56, E60, E67, and E71 each carry 4-carboxyglutamate. C73 and C79 are oxidised to a cystine. The propeptide at 97-103 (RKRRGTK) is removed in mature form; probably by carboxypeptidase N.

It belongs to the osteocalcin/matrix Gla protein family. Requires vitamin K-dependent gamma-carboxylation for its function.

It localises to the secreted. Associates with the organic matrix of bone and cartilage. Thought to act as an inhibitor of bone formation. The sequence is that of Matrix Gla protein (MGP) from Homo sapiens (Human).